An 886-amino-acid polypeptide reads, in one-letter code: Extended synaptotagmin-3 (886 aa).

The segment at methionine 1–proline 21 is disordered. Over methionine 1 to serine 29 the chain is Cytoplasmic. The next 2 membrane-spanning stretches (helical) occupy residues glutamine 30–tyrosine 50 and leucine 51–tryptophan 71. Residues tryptophan 72–serine 886 are Cytoplasmic-facing. Positions aspartate 114–lysine 291 constitute an SMP-LTD domain. C2 domains lie at lysine 291–phenylalanine 408 and serine 426–histidine 566. 9 residues coordinate Ca(2+): lysine 321, aspartate 322, aspartate 332, aspartate 379, glutamate 380, aspartate 381, aspartate 383, aspartate 385, and aspartate 386. A disordered region spans residues glutamine 613–lysine 673. The segment covering arginine 642 to serine 659 has biased composition (low complexity). Basic and acidic residues predominate over residues proline 664–lysine 673. The region spanning glutamine 754–tyrosine 876 is the C2 3 domain. The segment at arginine 801–lysine 808 is required for phosphatidylinositol 4,5-bisphosphate-dependent location at the cell membrane.

This sequence belongs to the extended synaptotagmin family. In terms of assembly, interacts with ESYT1 and ESYT2. Widely expressed with high level in cerebellum and skin.

It localises to the cell membrane. The protein resides in the endoplasmic reticulum membrane. Its function is as follows. Binds glycerophospholipids in a barrel-like domain and may play a role in cellular lipid transport. Tethers the endoplasmic reticulum to the cell membrane and promotes the formation of appositions between the endoplasmic reticulum and the cell membrane. The chain is Extended synaptotagmin-3 from Homo sapiens (Human).